The sequence spans 324 residues: MELTGVIAQSIFDDNAADLKLSWVAGLEGADRAFDVDFAKEATSAADLVGHLNLIHPNRIQVLGKPEITYYQRLSEENRKRQMGELILLEPPFLVVADGVDPPPDLELRCTRSSTPLFTSPISSAAVIDHLRLYLSRISAPRVTMHGVFLDILGMGVLIMGDSGLGKSELGLELISRGHGLVADDAVDFVRLGPDFIEGRCPPLLQNLLEVRGLGLLDIKTIFGETAVRRKMKIKLIVQLVRRNDGEFERLPLDSQYLDVLGLPIHMVKIQVAAGRNLAVLVEAAVRNTILRLRGIDTLRDFMDRQRAAMQAEAASHSPQGRLL.

Catalysis depends on residues His-146 and Lys-167. Residue 161 to 168 coordinates ATP; that stretch reads GDSGLGKS. Ser-168 contributes to the Mg(2+) binding site. Asp-185 acts as the Proton acceptor; for phosphorylation activity. Proton donor; for dephosphorylation activity in catalysis. Residues 209-218 are important for the catalytic mechanism of both phosphorylation and dephosphorylation; sequence LEVRGLGLLD. Glu-210 lines the Mg(2+) pocket. Arg-250 is a catalytic residue. The tract at residues 271-276 is important for the catalytic mechanism of dephosphorylation; sequence QVAAGR.

This sequence belongs to the HPrK/P family. In terms of assembly, homohexamer. Mg(2+) serves as cofactor.

It catalyses the reaction [HPr protein]-L-serine + ATP = [HPr protein]-O-phospho-L-serine + ADP + H(+). The catalysed reaction is [HPr protein]-O-phospho-L-serine + phosphate + H(+) = [HPr protein]-L-serine + diphosphate. Functionally, catalyzes the ATP- as well as the pyrophosphate-dependent phosphorylation of a specific serine residue in HPr, a phosphocarrier protein of the phosphoenolpyruvate-dependent sugar phosphotransferase system (PTS). HprK/P also catalyzes the pyrophosphate-producing, inorganic phosphate-dependent dephosphorylation (phosphorolysis) of seryl-phosphorylated HPr (P-Ser-HPr). The sequence is that of HPr kinase/phosphorylase from Ralstonia pickettii (strain 12J).